The chain runs to 201 residues: Adenylyl-sulfate kinase (201 aa).

Residue Gly-35–Ser-42 participates in ATP binding. The Phosphoserine intermediate role is filled by Ser-109.

It belongs to the APS kinase family.

The catalysed reaction is adenosine 5'-phosphosulfate + ATP = 3'-phosphoadenylyl sulfate + ADP + H(+). It functions in the pathway sulfur metabolism; hydrogen sulfide biosynthesis; sulfite from sulfate: step 2/3. Its function is as follows. Catalyzes the synthesis of activated sulfate. The protein is Adenylyl-sulfate kinase of Klebsiella pneumoniae (strain 342).